The sequence spans 3132 residues: MHQPPVRFTYRLLSYLVSAIIAGQPLLPAVGAVITPQNGAGMDKAANGVPVVNIATPNGAGISHNRFTDYNVGKEGLILNNATGKLNPTQLGGLIQNNPNLKAGGEAKGIINEVTGGKRSLLQGYTEVAGKAANVMVANPYGITCDGCGFINTPHATLTTGKPVMNADGSLQALEVTEGSITINGAGLDGTRSDAVSIIARATEVNAALHAKDLTVTAGANRITADGRVSALKGEGNVPKVAVDTGALGGMYARRIHLTSTESGVGVNLGNLYAREGDIILSSSGKLVLKNSLAGGNTTVTGTDVSLSGDNKAGGNLSVTGTTGLTLNQSRLVTDKNLVLSSSGQIVQNGGELTAGQNAMLSAQHLNQTSGTVNAAENVTLTTTDDTTLKGRSVAGKTLTVSSGSLNNGGTLVAGRDATVKTGTFSNTGTVQGNGLKVTATDLTSTGSIKSGSTLDISARNATLSGDAGAKDRALVTVSGTLENRGRLVSDDVLTLSATQINNSGTLSGAKELVASADTLTTTEKSVTNSDGNLMLDSASSTLAGETSAGGTVSVKGNSLKTTTTAQTQGNSVSVDVQNAQLDGTQAARDILTLNASEKLTHSGKSSAPSLSLSAPELTSSGVLVGSALNTQSQTLTNSGLLQGKASLTVNTQRLDNQQNGTLYSAADLTLDIPDIRNSGLITGDNGLMLNAVSLSNPGKIIADTLSVRATTLDGDGLLQGAGALALAGDTLSLGSNGRWLTAGDLSLRGKTLHTAGTTQGQNLTVQADRWANSGSVQATGNLTASATGQLTSTGDIMSQGDTTLNAATTDNRGSLLSAGTLSLDGNSLDNSGTVQGNHVTIRQNGVTNSGTLTGIAALTLAARMDMASPQPALMNNGGSLLTSGDLTITAGSLANSGAIQAADSLTARLTGELVSTAGSKVTSNGEMALSALNLSNSGQWIAKNLTLKANSLTSAGDITGVDALTLTVNQTLNNHASGKLLSAGVLTLKADSVKNDGQLQGNATTITAGQLTNGGHLQGETLTLAASGGVNNRSGGVLMSRNALNVSTATLSNQGTIQGGGGVSLNATDRLQNDGKILSGSNLTLTAQVLANTGSGLVQAATLLLDVVNTVNGGRVLATGSADVKGTTLNNTGTFQGADLLVNYHTFSNSGTLLGTSGLGVKGSSLLQNGTGRLYSAGNLLLDAQDFSGQGQVVATGDVTLKLIAALTNHGTLAAGKTLSVTSQNAVTNGGVMQGDAMVLGAGEAFTNNGTLTAGKGNSVFSAQRLFLNAPGSLQAGGDVSLNSRSDITISGFTGTAGSLTMNVAGTLLNSALIYAGNNLKLFTDRLHNQHGDILAGNSLWVQKDSSGTANSEIINRSGNIETTRGDITMNTAHLLNSWDAISASHEVIPGSSHGVISPVPENNRWWGVVRHDGVEYLAVYWGKGATVPDEYRIRTGDTETVTVSASGHAARISGGADMHIRAGRLDNEASFILAGGGMTLSGDTLNNQGWQEGTTGKETVWRLASGSLPKAWFTEPWYKVYRQVSPDATEASGTSPAGQYRAVISAAGDVSASFATDTGNTTVMPRAGGAGNTITVPSLNSLTPPTVSQGVSGEALLNESGTGITGPVWNDALPDTLKDIPGALSLSGASVSSYPLPSGNNGYFVPSTDPDSPYLITVNPKLDGLGKVDSSLFAGLYDLLRMQPGEAPRETDPAYTDEKQFLGSSYILDRLGLKPEKDYRFLGDAAFDTRYVSNVILNQTGSRYINGTGSDLAQMKYLMDSAAAQQKALGLTFGVSLTAGQVAQLTRSLLWWESVTINGQTVMVPKLYLSPEDITLHNGSVISGNNVQLAGGNITNSGSSINAQNDLLLDRTGSIDNLNAGLINAGGALNLKAIGDIGNISSVISGKTVSLESATGNISNLTRTEQWAMNNGYNHFSGTDTGPLAAVRATDSLFMGAAGDISITGAAVSAGDSVLLAAGNDLNMNAIQAGERRRYGGSGWYETHAVAPTVTAGNSLMLSAGRDVNSQAAGITAENSMDIRAGRDVNMAAESTGAGDHDSTFSMKTVHDSVRQQGTDMTSGGDITVTAGRDITSVATAVTAKGDIRVNAGHDIVLGTATESDYHYSESGETRNRLLSHQTTRTITEDSVTREKGSLLSGNRVTVNAGNNLTVQGSDVVADRDVSLAADNHVDVLAATSTDTSWRFKETKTSGLTGTGGIGFTTGSSKTTHDRREAGTTQSQSASTIGSTAGNVSITAGKQAHISGSDVIANRDISITGDSVVVDPGHDRRTVDEKFEQKKSGLTVALSGAVGSAINNAVTMAREAKETSDSRLAALKGTQAVLSGVQAGVNHGLQQQSADPNNGIGVSISLNHQQSKSETKYQHDIVSGSTLSAGNNVSVTATGKNKDHNNSGDMLITGSQIKSGNDTSLNAQNDILLAAAADTRQTTGKNSSKGGGVGVSFGGGTNGGGLSIFAGINGSEGREKGNGTTWTETTLDAGKNVSLTSGRDTTLSGAQVSGEKVTADVGNNLTISSLQDSDRYDSRQNRVAAGGSFTFGSMSGSGYASISQDKIKSNYDSVREQSGIYAGKDGFDVTVGNHTQLNGAVIASTATDDKNSLNTNTLGWSDIHNQADYKASHTGISLSGGSGMSASQMVASNAIAGAANALTGMSGSSGHAEGTTSSAISGGNLIIRNKESQKQDIAGLSRDPENANGSIAPIFDREKEQKRLQEAQVISQISGQMSNIVMTYGETEAMKAARKEHPGMSDAQLRETPEYREVMKGYGTGSTPQMVVQAITGVLGGLNAGNPGQVLAGGLNPAVAQLIKQATGDNREANLMAHAVWGALAAQLGGNNAASGAAGAFSGELAARYIIDNYYGGRTDNLSEQERQQISMLATIASGIAGGLVGNSTSAAGTGAQAGRNSVENNAMSGLEGFGTGFQSYVQAQEALVNNTNLTDKNGKVLNPATPEEIKYASDKLVTGSIPEGQDPARGLLISWGAGASVFGGELIAPAVGTVAVIGGTLLGGTTDAVKQFLTLKPGEQYSTTDTLIAAGEGGLTQGKGVIFSTFINTMGAYLGSKAKGEDPTGPMVGNAIGTALGNKAGDKFTKEMLSRGFGSVTSEVTGTVTGSVIGTVTDYQIEKLGKGNKEGAK.

Residues 1-32 (MHQPPVRFTYRLLSYLVSAIIAGQPLLPAVGA) constitute a signal peptide (signal). The two-partner system transport domain (TPS) stretch occupies residues 36 to 322 (PQNGAGMDKA…AGGNLSVTGT (287 aa)). The tract at residues 351 to 1378 (GELTAGQNAM…ITMNTAHLLN (1028 aa)) is FHA-1. A receptor-binding domain (RBD) region spans residues 1379-1635 (SWDAISASHE…LSLSGASVSS (257 aa)). Residues 1636–1820 (YPLPSGNNGY…LSPEDITLHN (185 aa)) form a YP domain region. The tract at residues 1821–1859 (GSVISGNNVQLAGGNITNSGSSINAQNDLLLDRTGSIDN) is periplasmic FHA-1 repeat (pFR). The FHA-2 stretch occupies residues 1930–2526 (RATDSLFMGA…QDSDRYDSRQ (597 aa)). Disordered stretches follow at residues 2195–2228 (TGTGGIGFTTGSSKTTHDRREAGTTQSQSASTIG) and 2456–2497 (AGIN…SGAQ). Polar residues-rich tracts occupy residues 2217–2228 (GTTQSQSASTIG) and 2483–2497 (VSLTSGRDTTLSGAQ). Positions 2862-2904 (DNLSEQERQQISMLATIASGIAGGLVGNSTSAAGTGAQAGRNS) are pre-toxin (PT) domain. The VENN CT cleavage motif motif lies at 2905–2908 (VENN). The interval 2909 to 3121 (AMSGLEGFGT…IGTVTDYQIE (213 aa)) is C-terminal effector domain (CT).

The protein in the N-terminal section; belongs to the CdiA toxin family. As to quaternary structure, probably interacts with cognate immunity protein CdiI. Post-translationally, expressed as 303 kDa protein which can be processed to 284 kDa and 195 kDa forms.

The protein resides in the secreted. It localises to the target cell. It is found in the target cell cytoplasm. Its function is as follows. Toxic component of a toxin-immunity protein module, which functions as a cellular contact-dependent growth inhibition (CDI) system. CDI modules allow bacteria to communicate with and inhibit the growth of closely related neighboring bacteria (target cell counts decrease 1000- to 10(5)-fold) in a contact-dependent fashion. Inhibitory cells must be in logarithmic (not stationary) phase to inhibit growth of their targets, but protein synthesis is not necessary. The presence of P or S but not type 1 pili protects the target cells against growth inhibition for this CDI. BamA on the outer membrane of target cells acts as a receptor for CdiA, while target cell multidrug efflux pump AcrB facilitates its transport into the cytoplasm. Outer membrane receptor function is dependent on extracellular loops of BamA. Cells undergoing CDI show a 2- to 5-fold reversible decrease in aerobic respiration, proton motive force and steady-state ATP levels, suggesting this CT module is an ionophore that disrupts the target cell's inner cell membrane. Growth recovery requires an energy source. Cells expressing this protein in the absence of CdiI initially form filaments, some of which contain multiple nucleoids, while others are devoid of nucleoids. CDI cells induce the phage shock response, but pspA is not required for recovery from CDI. CDI is neutralized by its cognate immunity protein CdiI, but not by non-cognate CdiI from other bacteria with different CDI systems. Plays a role in biofilm formation, a region N-terminal to residue 644 is implicated in this receptor-independent cell adhesion. Functionally, the CdiA protein is thought to be exported from the cell through the central lumen of CdiB, the other half of its two-partner system (TPS). The TPS domain probably remains associated with CdiB while the FHA-1 domain forms an extended filament (33 nm long) with the receptor-binding domain (RBD) at its extremity; in the secretion arrested state the C-terminus of the RBD and YP domains form a hairpin-like structure as the FHA-2, PT and CT domains are periplasmic. The YP domain is probably responsible for this arrest at the point where it re-enters the host cell periplasm. Upon binding to a target cell outer membrane receptor (BamA for this CDI) a signal is transmitted to activate secretion. The filament becomes about 5 nm longer, the rest of CdiA is secreted and the FHA-2 domain becomes stably associated with the target cell's outer membrane where it facilitates entry of the toxic CT domain into the target cell periplasm. From there the toxic CT domain is cleaved and gains access to the target cell cytoplasm via an inner membrane protein (multidrug efflux pump AcrB for this CDI). This Escherichia coli protein is Toxin CdiA.